Consider the following 210-residue polypeptide: MADS-box protein AeAP3-2 (210 aa).

The MADS-box domain maps to 1-36; the sequence is GGLLKKARELAILCDAQLGVIIFSSSGKMFEFSSPP. Residues 59–149 form the K-box domain; the sequence is NQQVYCEITR…YRVIQDHHAA (91 aa).

Expressed exclusively in the carpel.

The protein resides in the nucleus. In terms of biological role, probable transcription factor. The chain is MADS-box protein AeAP3-2 (AP3-2) from Asarum europaeum (Asarabacca).